The primary structure comprises 349 residues: Ethyl acetate hydrolase (349 aa).

Residues 67–300 (YIGEGRALDP…SHDQFFTVDD (234 aa)) enclose the AB hydrolase-1 domain. Ser-139 serves as the catalytic Nucleophile. Catalysis depends on residues Asp-293 and His-322.

Belongs to the AB hydrolase superfamily. Acetyl esterase family. As to quaternary structure, homodimer.

It carries out the reaction ethyl acetate + H2O = ethanol + acetate + H(+). Esterase that catalyzes the hydrolysis of ethyl acetate. Involved in the degradation of short chain methyl ketones (MEK) such as 2-butanone and 2-hexanone. In vitro, can also hydrolyze vinyl acetate, 4-nitrophenyl acetate, methyl acetate, propyl acetate, benzyl acetate and methyl propionate. The highest activities are obtained with acetic acid esters, but the alcohol group also plays an important role, as compounds with two carbon atoms in the alcohol moiety, i.e., vinyl and ethyl acetate, are by far the preferred substrates. The polypeptide is Ethyl acetate hydrolase (Pseudomonas veronii).